We begin with the raw amino-acid sequence, 254 residues long: Photosystem II 22 kDa protein 2, chloroplastic (254 aa).

The N-terminal 38 residues, 1-38, are a transit peptide targeting the chloroplast; the sequence is MALQQSMAMPMMVVSGLGTAPRSSPMVQLQRMKKHLVV. 2 tandem repeats follow at residues 42 to 148 and 149 to 253. A run of 4 helical transmembrane segments spans residues 86-106, 120-140, 184-204, and 219-239; these read VAML…KGIL, AEPL…GALG, LFVG…EIIT, and PINE…FAAI.

This sequence belongs to the ELIP/psbS family.

The protein localises to the plastid. It localises to the chloroplast thylakoid membrane. Functionally, involved in high light-mediated energy-dependent nonphotochemical quenching (NPQ, qE) and thermal dissipation (TD) thus regulating energy conversion in photosystem II and protecting from photoinhibition. Also seems to regulate quantum yield of electron transport in fluctuating light conditions. The sequence is that of Photosystem II 22 kDa protein 2, chloroplastic from Oryza sativa subsp. indica (Rice).